Reading from the N-terminus, the 429-residue chain is Glutamate-1-semialdehyde 2,1-aminomutase (429 aa).

Position 270 is an N6-(pyridoxal phosphate)lysine (Lys270).

The protein belongs to the class-III pyridoxal-phosphate-dependent aminotransferase family. HemL subfamily. Homodimer. Pyridoxal 5'-phosphate serves as cofactor.

It is found in the cytoplasm. The enzyme catalyses (S)-4-amino-5-oxopentanoate = 5-aminolevulinate. The protein operates within porphyrin-containing compound metabolism; protoporphyrin-IX biosynthesis; 5-aminolevulinate from L-glutamyl-tRNA(Glu): step 2/2. In Cupriavidus pinatubonensis (strain JMP 134 / LMG 1197) (Cupriavidus necator (strain JMP 134)), this protein is Glutamate-1-semialdehyde 2,1-aminomutase.